The primary structure comprises 201 residues: MVSWIISRLVVLIFGTLYPAYYSYKAVKSKDIKEYVKWMMYWIIFALFTTAETFTDIFLCWFPFYYELKIAFVAWLLSPYTKGSSLLYRKFVHPTLSSKEKEIDDCLVQAKDRSYDALVHFGKRGLNVAATAAVMAASKGQGALSERLRSFSMQDLTTIRGDGAPAPSGPPPPGTGRSSGKHSQPKMSRSASESAGSSGTA.

2 consecutive transmembrane segments (helical) span residues 1 to 21 and 35 to 55; these read MVSW…YPAY and YVKW…ETFT. Residue Ser-152 is modified to Phosphoserine. Residues 158–201 form a disordered region; it reads TIRGDGAPAPSGPPPPGTGRSSGKHSQPKMSRSASESAGSSGTA. The span at 188–201 shows a compositional bias: low complexity; the sequence is SRSASESAGSSGTA.

It belongs to the DP1 family. In terms of assembly, interacts with OLFR992. Interacts with SPAST and ATL1. Interacts (via C-terminus) with microtubules. Interacts with ZFYVE27. In terms of tissue distribution, detected in olfactory sensory neurons of the olfactory epithelium, and in total brain.

The protein localises to the membrane. It localises to the mitochondrion membrane. The protein resides in the endoplasmic reticulum. Functionally, required for endoplasmic reticulum (ER) network formation, shaping and remodeling; it links ER tubules to the cytoskeleton. May also enhance the cell surface expression of odorant receptors. The chain is Receptor expression-enhancing protein 1 (Reep1) from Mus musculus (Mouse).